The following is a 193-amino-acid chain: DNA damage-inducible transcript 4-like protein (193 aa).

This sequence belongs to the DDIT4 family. As to expression, up-regulated in atherosclerotic plaques relative to healthy segments of the same artery.

The protein localises to the cytoplasm. Inhibits cell growth by regulating the TOR signaling pathway upstream of the TSC1-TSC2 complex and downstream of AKT1. This chain is DNA damage-inducible transcript 4-like protein (DDIT4L), found in Homo sapiens (Human).